The primary structure comprises 58 residues: Large ribosomal subunit protein uL30 (58 aa).

It belongs to the universal ribosomal protein uL30 family. In terms of assembly, part of the 50S ribosomal subunit.

The sequence is that of Large ribosomal subunit protein uL30 from Acinetobacter baumannii (strain AB307-0294).